The following is a 102-amino-acid chain: Putative defensin-like protein 298 (102 aa).

Residues 1–29 form the signal peptide; the sequence is MSASKATMLILFALFLSDILLVSIPRAEA. Disulfide bonds link Cys-35–Cys-53, Cys-41–Cys-58, Cys-46–Cys-60, Cys-74–Cys-93, Cys-80–Cys-98, and Cys-86–Cys-100.

It belongs to the DEFL family.

The protein localises to the secreted. The chain is Putative defensin-like protein 298 from Arabidopsis thaliana (Mouse-ear cress).